Here is a 120-residue protein sequence, read N- to C-terminus: NAD(P)H-quinone oxidoreductase subunit 3, chloroplastic (120 aa).

A run of 3 helical transmembrane segments spans residues 3 to 23 (ILEG…IPVI), 64 to 84 (MFAL…PWAV), and 89 to 109 (LGLS…IGLV).

Belongs to the complex I subunit 3 family. NDH is composed of at least 16 different subunits, 5 of which are encoded in the nucleus.

It is found in the plastid. The protein resides in the chloroplast thylakoid membrane. It carries out the reaction a plastoquinone + NADH + (n+1) H(+)(in) = a plastoquinol + NAD(+) + n H(+)(out). The catalysed reaction is a plastoquinone + NADPH + (n+1) H(+)(in) = a plastoquinol + NADP(+) + n H(+)(out). NDH shuttles electrons from NAD(P)H:plastoquinone, via FMN and iron-sulfur (Fe-S) centers, to quinones in the photosynthetic chain and possibly in a chloroplast respiratory chain. The immediate electron acceptor for the enzyme in this species is believed to be plastoquinone. Couples the redox reaction to proton translocation, and thus conserves the redox energy in a proton gradient. The polypeptide is NAD(P)H-quinone oxidoreductase subunit 3, chloroplastic (Nephroselmis olivacea (Green alga)).